The chain runs to 168 residues: MLKIKYLLIGLSLSAMSSYSLAAAGPTLTKELALNVLSPAALDATWAPQDNLTLSNTGVSNTLVGVLTLSNTSIDTVSIASTNVSDTSKNGTVTFAHETNNSASFATTISTDNANITLDKNAGNTIVKTTNGSQLPTNLPLKFITTEGNEHLVSGNYRANITITSTIK.

Positions 1–22 (MLKIKYLLIGLSLSAMSSYSLA) are cleaved as a signal peptide.

In terms of processing, a longer minor form, starting at amino acid 15, has been detected by amino acid sequencing. This is probably due to alternative processing of the signal peptide.

The protein localises to the fimbrium. In terms of biological role, fimbriae (also called pili), polar filaments radiating from the surface of the bacterium to a length of 0.5-1.5 micrometers and numbering 100-300 per cell, enable bacteria to colonize the epithelium of specific host organs. The polypeptide is CS3 fimbrial subunit A (Escherichia coli).